We begin with the raw amino-acid sequence, 251 residues long: uncharacterized protein (251 aa).

An N-terminal signal peptide occupies residues 1 to 18 (MRILIILSIILCSLFARA).

It belongs to the MlaA family.

This is an uncharacterized protein from Rickettsia felis (strain ATCC VR-1525 / URRWXCal2) (Rickettsia azadi).